The chain runs to 244 residues: MTSTEAAGTGKAPAIRANPALQTYYESQESYLVYEVVLRGSHHFGFYEKDTYWPFPVGRSLERMEAKLLSALALPSGSQILDAGCGFGPVAISMAKKGMRVTAIDIIDHHVTKARRNVEKAGLPKGQVTVEKMDYQHLESIASESHDDAKAAATGFFRILKPGGRIAFFEAQRSRTSGDYDEGDELAGHLKLVNEYTAMPTNELSREDYFKDLLEDAGFVDVEFTLPPGTREPREHWSYSALKA.

This sequence belongs to the class I-like SAM-binding methyltransferase superfamily. Erg6/SMT family. S-adenosyl-L-methionine is required as a cofactor.

The catalysed reaction is 3-[(2E,4E,8S,10E,12Z)-4,8-dimethyltetradeca-2,4,10,12-tetraenoyl]-4-hydroxy-5-(4-hydroxyphenyl)-1,2-dihydropyridin-2-one = ilicicolin H. The protein operates within mycotoxin biosynthesis. Functionally, S-adenosyl-l-methionine-dependent Diels-Alderase; part of the gene cluster that mediates the biosynthesis of ilicicolin H, a 4-hydroxy-2-pyridonealkaloid that has potent and broad antifungal activities by inhibiting the mitochondrial respiration chain. IliD catalyzes the Diels-Alder reaction that converts the acyclic 2-pyridone intermediate to 8-epi-ilicicolin H. The biosynthesis of ilicicolin H starts with formation of the tetramic acid by the hybrid PKS-NRPS synthetase iliA with the partnering trans-enoyl reductase iliB since iliA lacks a designated enoylreductase (ER) domain. The cytochrome P450 monooxygenase iliC then catalyzes the ring expansion of the tetramate to the acyclic 2-pyridone. The pericyclase iliD further converts the acyclic 2-pyridone into 8-epi-ilicicolin H. 8-epi-ilicicolin H might then spontaneously convert to ilicicolin H since ilicicolin H is produced in the absence of the epimerase iliE, in contrast to what was observed for the Talaromyces variabilis ilicolin H biosynthetic pathway. The protein is S-adenosyl-L-methionine-dependent Diels-Alderase iliD of Neonectria sp. (strain DH2).